A 119-amino-acid chain; its full sequence is Phospholipase A2 A2-actitoxin-Cgg2a (119 aa).

6 disulfide bridges follow: Cys-25-Cys-119, Cys-27-Cys-43, Cys-42-Cys-101, Cys-49-Cys-94, Cys-61-Cys-87, and Cys-78-Cys-92. Ca(2+) is bound by residues Gly-28 and Gly-30. The active site involves His-46. Asp-47 serves as a coordination point for Ca(2+). Asp-95 is a catalytic residue.

Belongs to the phospholipase A2 family. As to quaternary structure, homodimer. Ca(2+) is required as a cofactor.

Its subcellular location is the secreted. It is found in the nematocyst. It carries out the reaction a 1,2-diacyl-sn-glycero-3-phosphocholine + H2O = a 1-acyl-sn-glycero-3-phosphocholine + a fatty acid + H(+). In terms of biological role, sea anemone phospholipase A2 (PLA2). When incubated with plasma, this protein shows a moderate anticoagulant activity (0.15 ug of enzyme/200 uL of plasma), inhibiting clotting induced by thrombin. This enzyme also induces myotoxicity, and edema. PLA2 catalyzes the calcium-dependent hydrolysis of the 2-acyl groups in 3-sn-phosphoglycerides. This Condylactis gigantea (Giant Caribbean anemone) protein is Phospholipase A2 A2-actitoxin-Cgg2a.